A 346-amino-acid chain; its full sequence is F(420)H(2) dehydrogenase subunit H (346 aa).

Transmembrane regions (helical) follow at residues 18-38 (GIVGLVLIGVIFMGAMGAVWL), 91-111 (IFMLGSVFLMLVALPVGAVFI), 125-145 (ISVLYIEAVSALSIFGIFMVA), 170-190 (PLGITVISVAAMTGSLNIVDI), 196-216 (LHWNIFLQPLGCFVFFVSLMA), 257-277 (ILGSFLVALLFLGGWNVPGFI), 284-304 (GIIVPTGFLIVKVVFVLMVII), and 326-346 (LLPLALLNLVWAVGLGLYLGA).

It belongs to the complex I subunit 1 family. In terms of assembly, the FPO complex is composed of at least 13 different subunits. FpoA, FpoH, FpoJ, FpoK, FpoL, FpoM and FpoN proteins constitute the membrane sector of the complex.

It localises to the cell membrane. The enzyme catalyses methanophenazine + reduced coenzyme F420-(gamma-L-Glu)(n) = dihydromethanophenazine + oxidized coenzyme F420-(gamma-L-Glu)(n) + H(+). In terms of biological role, component of the F(420)H(2) dehydrogenase (FPO complex) which is part of the energy-conserving F(420)H(2):heterodisulfide oxidoreductase system. The membrane-bound electron transfer system of the complex plays an important role in the metabolism of methylotrophic methanogens when the organisms grow on methanol or methylamines. Catalyzes the oxidation of methanophenazine to dihydromethanophenazine. It shuttles electrons from F(420)H(2), via FAD and iron-sulfur (Fe-S) centers, to methanophenazine (an electron carrier in the membrane). It couples the redox reaction to proton translocation (for every two electrons transferred, two hydrogen ions are translocated across the cytoplasmic membrane), and thus conserves the redox energy in a proton gradient. This Methanosarcina barkeri (strain Fusaro / DSM 804) protein is F(420)H(2) dehydrogenase subunit H.